A 1083-amino-acid polypeptide reads, in one-letter code: Centrosomal protein of 131 kDa (1083 aa).

Disordered regions lie at residues 1–155 (MKGT…AGPR) and 220–258 (GSES…EVTE). The tract at residues 1 to 250 (MKGTRAIGSV…RNNTGGSTGL (250 aa)) is interaction with PLK4. Ser-14 and Ser-35 each carry phosphoserine. Position 47 is a phosphoserine; by MAPKAPK2 (Ser-47). Positions 68 to 87 (QAINNLRRSNSTTQVSQPRS) are enriched in polar residues. At Ser-78 the chain carries Phosphoserine; by MAPKAPK2 and PLK4. Phosphoserine is present on residues Ser-89, Ser-105, Ser-114, Ser-146, and Ser-150. Polar residues predominate over residues 138 to 148 (LPSNARSSSAL). Residues 232-245 (NVSSATHSARNNTG) show a composition bias toward polar residues. The 21-residue stretch at 269–289 (NQATVTIQRWYRHQVQRRGAG) folds into the IQ domain. Positions 301 to 429 (REEQRQRSGE…PQQPPEDRTQ (129 aa)) are disordered. 2 stretches are compositionally biased toward basic and acidic residues: residues 317-333 (HQQK…EKAR) and 360-369 (GPPENPRETR). Ser-381 is modified (phosphoserine). Thr-383 is modified (phosphothreonine). Ser-453, Ser-489, Asp-496, Ser-499, Ser-731, and Ser-798 each carry phosphoserine. The segment covering 1047–1076 (KEEAVSSLRTQHEAAVKRADHLEELLEQHR) has biased composition (basic and acidic residues). The tract at residues 1047-1083 (KEEAVSSLRTQHEAAVKRADHLEELLEQHRRPTPSTK) is disordered.

It belongs to the CEP131 family. Self-associates. Associates with the centriolar satellite BBSome protein complex. Interacts with BBS4; the interaction limits BBS4 availability for association with the BBSome complex, and hence negatively regulates ciliary localization of the BBSome complex. Interacts with MIB1. Interacts with PCM1; the interaction increases in response to ultraviolet light (UV) radiation. Associates with microtubules; association with microtubules is reduced in response to cellular stress, such as UV stimulation, in a process that requires p38 MAP kinase signaling. Interacts with CEP290, DCTN1, PCNT, PCM1 and CEP152. Interacts with 14-3-3 proteins following UV-induced phosphorylation by MAPKAPK2; this inhibits formation of novel centriolar satellites. Interacts with SDCCAG8. Interacts with CCDC61. Interacts with PLK4. Post-translationally, ubiquitinated. Undergoes monoubiquitination catalyzed by the E3 ubiquitin-protein ligase MIB1 in proliferating cells, preventing cilia formation. Monoubiquitination by MIB1 is inhibited in response to cellular stress, such as ultraviolet light (UV) radiation or heat shock, resulting in cilia formation initiation. MAPKAPK2-dependent phosphorylation at Ser-47 and Ser-78 occurs in response to cellular stress such as exposure to ultraviolet irradiation and promotes binding to 14-3-3 proteins which leads to cytoplasmic sequestration of CEP131 and blocks formation of new centriolar satellites. Phosphorylation at Ser-78 mediated by PLK4 is essential for proper organization and integrity of centriolar satellites but is dispensable for its localization to centrioles and its function in ciliogenesis.

The protein resides in the cytoplasm. The protein localises to the cytoskeleton. It localises to the microtubule organizing center. It is found in the centrosome. Its subcellular location is the centriolar satellite. The protein resides in the centriole. The protein localises to the cilium basal body. It localises to the cytoplasmic vesicle. It is found in the secretory vesicle. Its subcellular location is the acrosome. Its function is as follows. Component of centriolar satellites contributing to the building of a complex and dynamic network required to regulate cilia/flagellum formation. In proliferating cells, MIB1-mediated ubiquitination induces its sequestration within centriolar satellites, precluding untimely cilia formation initiation. In contrast, during normal and ultraviolet or heat shock cellular stress-induced ciliogenesis, its non-ubiquitinated form is rapidly displaced from centriolar satellites and recruited to centrosome/basal bodies in a microtubule- and p38 MAPK-dependent manner. Also acts as a negative regulator of BBSome ciliary trafficking. Plays a role in sperm flagellar formation; may be involved in the regulation of intraflagellar transport (IFT) and/or intramanchette (IMT) trafficking, which are important for axoneme extension and/or cargo delivery to the nascent sperm tail. Required for optimal cell proliferation and cell cycle progression; may play a role in the regulation of genome stability in non-ciliogenic cells. Involved in centriole duplication. Required for CEP152, WDR62 and CEP63 centrosomal localization and promotes the centrosomal localization of CDK2. Essential for maintaining proper centriolar satellite integrity. The protein is Centrosomal protein of 131 kDa (CEP131) of Homo sapiens (Human).